Reading from the N-terminus, the 175-residue chain is RNA pyrophosphohydrolase (175 aa).

The Nudix hydrolase domain maps to 6–149; sequence GYRPNVGIVI…KRDVYRRVMK (144 aa). Positions 38–59 match the Nudix box motif; that stretch reads GGINPGETAEQAMYRELFEEVG.

It belongs to the Nudix hydrolase family. RppH subfamily. A divalent metal cation is required as a cofactor.

Functionally, accelerates the degradation of transcripts by removing pyrophosphate from the 5'-end of triphosphorylated RNA, leading to a more labile monophosphorylated state that can stimulate subsequent ribonuclease cleavage. The sequence is that of RNA pyrophosphohydrolase from Erwinia tasmaniensis (strain DSM 17950 / CFBP 7177 / CIP 109463 / NCPPB 4357 / Et1/99).